A 94-amino-acid polypeptide reads, in one-letter code: Large ribosomal subunit protein eL31 (94 aa).

Belongs to the eukaryotic ribosomal protein eL31 family.

The polypeptide is Large ribosomal subunit protein eL31 (rpl31e) (Pyrococcus abyssi (strain GE5 / Orsay)).